Reading from the N-terminus, the 322-residue chain is Phosphatidylserine decarboxylase proenzyme (322 aa).

Residues Asp-90, His-147, and Ser-254 each act as charge relay system; for autoendoproteolytic cleavage activity in the active site. The Schiff-base intermediate with substrate; via pyruvic acid; for decarboxylase activity role is filled by Ser-254. The residue at position 254 (Ser-254) is a Pyruvic acid (Ser); by autocatalysis. The interval 294–322 (EVEPVPLPEEEIKAEHDASPLVDDKKDET) is disordered. The span at 303 to 322 (EEIKAEHDASPLVDDKKDET) shows a compositional bias: basic and acidic residues.

The protein belongs to the phosphatidylserine decarboxylase family. PSD-B subfamily. Prokaryotic type I sub-subfamily. As to quaternary structure, heterodimer of a large membrane-associated beta subunit and a small pyruvoyl-containing alpha subunit. The cofactor is pyruvate. Post-translationally, is synthesized initially as an inactive proenzyme. Formation of the active enzyme involves a self-maturation process in which the active site pyruvoyl group is generated from an internal serine residue via an autocatalytic post-translational modification. Two non-identical subunits are generated from the proenzyme in this reaction, and the pyruvate is formed at the N-terminus of the alpha chain, which is derived from the carboxyl end of the proenzyme. The autoendoproteolytic cleavage occurs by a canonical serine protease mechanism, in which the side chain hydroxyl group of the serine supplies its oxygen atom to form the C-terminus of the beta chain, while the remainder of the serine residue undergoes an oxidative deamination to produce ammonia and the pyruvoyl prosthetic group on the alpha chain. During this reaction, the Ser that is part of the protease active site of the proenzyme becomes the pyruvoyl prosthetic group, which constitutes an essential element of the active site of the mature decarboxylase.

Its subcellular location is the cell membrane. The catalysed reaction is a 1,2-diacyl-sn-glycero-3-phospho-L-serine + H(+) = a 1,2-diacyl-sn-glycero-3-phosphoethanolamine + CO2. Its pathway is phospholipid metabolism; phosphatidylethanolamine biosynthesis; phosphatidylethanolamine from CDP-diacylglycerol: step 2/2. Functionally, catalyzes the formation of phosphatidylethanolamine (PtdEtn) from phosphatidylserine (PtdSer). This Salmonella arizonae (strain ATCC BAA-731 / CDC346-86 / RSK2980) protein is Phosphatidylserine decarboxylase proenzyme.